Reading from the N-terminus, the 748-residue chain is Methylmalonyl-CoA mutase, mitochondrial (748 aa).

The transit peptide at M1 to L30 directs the protein to the mitochondrion. Residue Q48 coordinates malonyl-CoA. Position 87 is an N6-acetyllysine (K87). Residues Y94–M97 and T104–Y108 contribute to the malonyl-CoA site. An N6-acetyllysine modification is found at K210. Malonyl-CoA-binding positions include T214–Q216, R226, K253, H263, and R302–S304. Position 333 is an N6-acetyllysine (K333). K341 bears the N6-succinyllysine mark. The residue at position 479 (S479) is a Phosphoserine. An N6-succinyllysine modification is found at K593. K600 carries the post-translational modification N6-acetyllysine. In terms of domain architecture, B12-binding spans R612 to K744. Residue H625 participates in adenosylcob(III)alamin binding.

Belongs to the methylmalonyl-CoA mutase family. Homodimer. Interacts (the apoenzyme form) with MMAA; the interaction is GTP dependent. It depends on adenosylcob(III)alamin as a cofactor.

It is found in the mitochondrion matrix. The protein localises to the mitochondrion. Its subcellular location is the cytoplasm. The catalysed reaction is (R)-methylmalonyl-CoA = succinyl-CoA. Inhibited by itaconyl-CoA, a metabolite that inactivates the coenzyme B12 cofactor. In terms of biological role, catalyzes the reversible isomerization of methylmalonyl-CoA (MMCoA) (generated from branched-chain amino acid metabolism and degradation of dietary odd chain fatty acids and cholesterol) to succinyl-CoA (3-carboxypropionyl-CoA), a key intermediate of the tricarboxylic acid cycle. This chain is Methylmalonyl-CoA mutase, mitochondrial (Mmut), found in Mus musculus (Mouse).